We begin with the raw amino-acid sequence, 179 residues long: Large ribosomal subunit protein uL5 (179 aa).

It belongs to the universal ribosomal protein uL5 family. Part of the 50S ribosomal subunit; part of the 5S rRNA/L5/L18/L25 subcomplex. Contacts the 5S rRNA and the P site tRNA. Forms a bridge to the 30S subunit in the 70S ribosome.

Functionally, this is one of the proteins that bind and probably mediate the attachment of the 5S RNA into the large ribosomal subunit, where it forms part of the central protuberance. In the 70S ribosome it contacts protein S13 of the 30S subunit (bridge B1b), connecting the 2 subunits; this bridge is implicated in subunit movement. Contacts the P site tRNA; the 5S rRNA and some of its associated proteins might help stabilize positioning of ribosome-bound tRNAs. In Synechococcus sp. (strain CC9311), this protein is Large ribosomal subunit protein uL5.